The primary structure comprises 313 residues: Methionyl-tRNA formyltransferase (313 aa).

110–113 lines the (6S)-5,6,7,8-tetrahydrofolate pocket; that stretch reads SLLP.

Belongs to the Fmt family.

The enzyme catalyses L-methionyl-tRNA(fMet) + (6R)-10-formyltetrahydrofolate = N-formyl-L-methionyl-tRNA(fMet) + (6S)-5,6,7,8-tetrahydrofolate + H(+). In terms of biological role, attaches a formyl group to the free amino group of methionyl-tRNA(fMet). The formyl group appears to play a dual role in the initiator identity of N-formylmethionyl-tRNA by promoting its recognition by IF2 and preventing the misappropriation of this tRNA by the elongation apparatus. This chain is Methionyl-tRNA formyltransferase, found in Lysinibacillus sphaericus (strain C3-41).